The sequence spans 407 residues: Peptidase T (407 aa).

His82 is a Zn(2+) binding site. Asp84 is an active-site residue. Asp143 is a binding site for Zn(2+). The Proton acceptor role is filled by Glu177. Positions 178, 200, and 382 each coordinate Zn(2+).

The protein belongs to the peptidase M20B family. Zn(2+) serves as cofactor.

It is found in the cytoplasm. The catalysed reaction is Release of the N-terminal residue from a tripeptide.. Cleaves the N-terminal amino acid of tripeptides. The chain is Peptidase T from Streptococcus pyogenes serotype M49 (strain NZ131).